A 337-amino-acid polypeptide reads, in one-letter code: Calcium-binding protein 39-like (337 aa).

This sequence belongs to the Mo25 family. In terms of assembly, component of a trimeric complex composed of STK11/LKB1, STRAD (STRADA or STRADB) and CAB39/MO25 (CAB39/MO25alpha or CAB39L/MO25beta): the complex tethers STK11/LKB1 in the cytoplasm and stimulates its catalytic activity.

Its function is as follows. Component of a complex that binds and activates STK11/LKB1. In the complex, required to stabilize the interaction between CAB39/MO25 (CAB39/MO25alpha or CAB39L/MO25beta) and STK11/LKB1. The polypeptide is Calcium-binding protein 39-like (CAB39L) (Homo sapiens (Human)).